The primary structure comprises 86 residues: Small ribosomal subunit protein bS18 (86 aa).

The protein belongs to the bacterial ribosomal protein bS18 family. As to quaternary structure, part of the 30S ribosomal subunit. Forms a tight heterodimer with protein bS6.

Binds as a heterodimer with protein bS6 to the central domain of the 16S rRNA, where it helps stabilize the platform of the 30S subunit. The protein is Small ribosomal subunit protein bS18 of Protochlamydia amoebophila (strain UWE25).